A 245-amino-acid chain; its full sequence is Carbohydrate deacetylase (245 aa).

Residues H61 and H122 each contribute to the Mg(2+) site.

This sequence belongs to the YdjC deacetylase family. Requires Mg(2+) as cofactor.

Its function is as follows. Probably catalyzes the deacetylation of acetylated carbohydrates an important step in the degradation of oligosaccharides. This is Carbohydrate deacetylase (celC) from Geobacillus stearothermophilus (Bacillus stearothermophilus).